The chain runs to 714 residues: Fatty acid oxidation complex subunit alpha (714 aa).

Residues 1–190 (MEMASVFTLN…KLGLVDDVVP (190 aa)) form an enoyl-CoA hydratase region. The interval 306–714 (APLNSVGILG…FWKTTATDLQ (409 aa)) is 3-hydroxyacyl-CoA dehydrogenase.

The protein in the N-terminal section; belongs to the enoyl-CoA hydratase/isomerase family. This sequence in the central section; belongs to the 3-hydroxyacyl-CoA dehydrogenase family. In terms of assembly, heterotetramer of two alpha chains (FadJ) and two beta chains (FadI).

Its subcellular location is the cytoplasm. It catalyses the reaction a (3S)-3-hydroxyacyl-CoA = a (2E)-enoyl-CoA + H2O. The catalysed reaction is a 4-saturated-(3S)-3-hydroxyacyl-CoA = a (3E)-enoyl-CoA + H2O. The enzyme catalyses a (3S)-3-hydroxyacyl-CoA + NAD(+) = a 3-oxoacyl-CoA + NADH + H(+). It carries out the reaction (3S)-3-hydroxybutanoyl-CoA = (3R)-3-hydroxybutanoyl-CoA. It functions in the pathway lipid metabolism; fatty acid beta-oxidation. In terms of biological role, catalyzes the formation of a hydroxyacyl-CoA by addition of water on enoyl-CoA. Also exhibits 3-hydroxyacyl-CoA epimerase and 3-hydroxyacyl-CoA dehydrogenase activities. This chain is Fatty acid oxidation complex subunit alpha, found in Escherichia coli (strain SE11).